The primary structure comprises 140 residues: UPF0134 protein MPN_130 (140 aa).

This sequence belongs to the UPF0134 family.

The polypeptide is UPF0134 protein MPN_130 (Mycoplasma pneumoniae (strain ATCC 29342 / M129 / Subtype 1) (Mycoplasmoides pneumoniae)).